The sequence spans 913 residues: Rab GTPase-activating protein tbc-8 (913 aa).

Residues 1–24 form a disordered region; that stretch reads MQMFRHSSADMWRAKKPTLERRST. An RUN domain is found at 106-240; the sequence is NLNSPYVTSL…TYRRMSNRIE (135 aa). The Rab-GAP TBC domain occupies 597–844; that stretch reads INTKEVRRMA…KVWEVIWAAQ (248 aa).

The protein belongs to the RUTBC family. In terms of assembly, interacts with rab-19. Interacts with ric-19; the interaction is direct and may be required for the activation of rab-2 and dense vesicle maturation in cholinergic motoneurons. Interacts (via RUN domain) with rund-1. Does not interact with unc-108 (GTP-bound form). In terms of tissue distribution, expressed in neurons in the head, tail and ventral nerve cord (at protein level).

It localises to the golgi apparatus. The protein resides in the trans-Golgi network. It is found in the early endosome. The protein localises to the cytoplasmic vesicle membrane. In terms of biological role, interacts with numerous Rab family members, functioning as Rab effector for some, and as GTPase activator for others. GTPase activator for rab-2. In association with ric-19 activates rab-2 during dense core vesicle maturation in cholinergic motoneurons. The protein is Rab GTPase-activating protein tbc-8 of Caenorhabditis elegans.